Consider the following 257-residue polypeptide: MALAKRIIPCLDVTAGRVVKGVNFVELRDAGDPVEIARRYDDQGADELTFLDITATSDQRDLILPIIEAVASQVFIPLTVGGGVRAVEDVRRLLNAGADKVSMNSSAVANPQLVRDAADKYGSQCIVVAIDAKRVSADGETPRWEVFTHGGRKNTGLDAIEWARRMAELGAGEILLTSMDRDGTKSGFDLALTRGVSDAVPVPVIASGGVGSLQHLADGIKDGRADAVLAASIFHYGEHTVGEAKRFMSDQGIPVRL.

Active-site residues include D12 and D131.

It belongs to the HisA/HisF family. As to quaternary structure, heterodimer of HisH and HisF.

It is found in the cytoplasm. It catalyses the reaction 5-[(5-phospho-1-deoxy-D-ribulos-1-ylimino)methylamino]-1-(5-phospho-beta-D-ribosyl)imidazole-4-carboxamide + L-glutamine = D-erythro-1-(imidazol-4-yl)glycerol 3-phosphate + 5-amino-1-(5-phospho-beta-D-ribosyl)imidazole-4-carboxamide + L-glutamate + H(+). It participates in amino-acid biosynthesis; L-histidine biosynthesis; L-histidine from 5-phospho-alpha-D-ribose 1-diphosphate: step 5/9. Its function is as follows. IGPS catalyzes the conversion of PRFAR and glutamine to IGP, AICAR and glutamate. The HisF subunit catalyzes the cyclization activity that produces IGP and AICAR from PRFAR using the ammonia provided by the HisH subunit. The chain is Imidazole glycerol phosphate synthase subunit HisF from Burkholderia ambifaria (strain MC40-6).